The sequence spans 166 residues: MYIEMIDETGLVSQEIMEQTLDLLNFAARKTGKDEKEMSVTFVTNERSHELNLEYRDTDRPTDVISLEYKPESPILFDERDLEENPDLAEMLSEFDAYIGELFISIDKAKEQAQEYGHSFEREMGFLAVHGFLHINGYDHYTPEEEKEMFTLQEEILTAYGLTRQS.

Zn(2+) is bound by residues His130, His134, and His140.

This sequence belongs to the endoribonuclease YbeY family. The cofactor is Zn(2+).

The protein resides in the cytoplasm. Functionally, single strand-specific metallo-endoribonuclease involved in late-stage 70S ribosome quality control and in maturation of the 3' terminus of the 16S rRNA. This Streptococcus uberis (strain ATCC BAA-854 / 0140J) protein is Endoribonuclease YbeY.